The chain runs to 352 residues: MWKGLIHQYKEFLPVTDQTPALTLHEGNTPLIHLPKLSEQLGIELHVKTEGVNPTGSFKDRGMVMAVAKAKEEGNDTIMCASTGNTSAAAAAYAARANMKCIVIIPNGKIAFGKLAQAVMYGAEIIAIDGNFDDALKIVRSICEKSPIALVNSVNPYRIEGQKTAAFEVCEQLGEAPDVLAIPVGNAGNITAYWKGFKEYHEKNGTGLPKMRGFEAEGAAAIVRNEVIENPETIATAIRIGNPASWDKAVKAAEESNGKIDEVTDDEILHAYQLIARVEGVFAEPGSCASIAGVLKQVKSGEIPKGSKVVAVLTGNGLKDPNTAVDISEIKPVTLPTDEDSILEYVKGAARV.

Residue Lys-59 is modified to N6-(pyridoxal phosphate)lysine. Pyridoxal 5'-phosphate-binding positions include Asn-85, 185–189 (GNAGN), and Thr-314.

It belongs to the threonine synthase family. The cofactor is pyridoxal 5'-phosphate.

It carries out the reaction O-phospho-L-homoserine + H2O = L-threonine + phosphate. It participates in amino-acid biosynthesis; L-threonine biosynthesis; L-threonine from L-aspartate: step 5/5. Functionally, catalyzes the gamma-elimination of phosphate from L-phosphohomoserine and the beta-addition of water to produce L-threonine. The sequence is that of Threonine synthase (thrC) from Bacillus subtilis (strain 168).